Reading from the N-terminus, the 546-residue chain is Sulfite oxidase, mitochondrial (546 aa).

Residues 1–80 constitute a mitochondrion transit peptide; the sequence is MLPRLYRSVA…YHDHRCRASQ (80 aa). The 80-residue stretch at 83-162 folds into the Cytochrome b5 heme-binding domain; the sequence is PRIYSKEDVR…LAEYKIGELN (80 aa). His-119 contacts heme b. Phosphoserine is present on Ser-124. Heme b is bound by residues His-144, Gln-146, and His-148. Positions 166–175 are hinge; that stretch reads RMSPPLEASD. Residues 176–402 are moco domain; that stretch reads PYSNDPMRHP…YSHWQRRDYK (227 aa). Mo-molybdopterin-binding positions include 216–220, Cys-265, Asp-323, His-362, Arg-367, and 378–380; these read FTRNH and HVK. Positions 403–539 are homodimerization; that stretch reads GFSPSVDWDT…RGVLSNAWHR (137 aa).

In terms of assembly, homodimer. It depends on heme b as a cofactor. Mo-molybdopterin is required as a cofactor.

Its subcellular location is the mitochondrion intermembrane space. It catalyses the reaction sulfite + O2 + H2O = sulfate + H2O2. The protein operates within energy metabolism; sulfur metabolism. In terms of biological role, catalyzes the oxidation of sulfite to sulfate, the terminal reaction in the oxidative degradation of sulfur-containing amino acids. The polypeptide is Sulfite oxidase, mitochondrial (Rattus norvegicus (Rat)).